We begin with the raw amino-acid sequence, 188 residues long: dCTP deaminase (188 aa).

Residues lysine 111 to arginine 116, threonine 135 to glutamate 137, glutamine 156, tyrosine 170, and glutamine 180 each bind dCTP. Glutamate 137 (proton donor/acceptor) is an active-site residue.

This sequence belongs to the dCTP deaminase family. In terms of assembly, homotrimer.

It carries out the reaction dCTP + H2O + H(+) = dUTP + NH4(+). The protein operates within pyrimidine metabolism; dUMP biosynthesis; dUMP from dCTP (dUTP route): step 1/2. Functionally, catalyzes the deamination of dCTP to dUTP. The protein is dCTP deaminase of Marinobacter nauticus (strain ATCC 700491 / DSM 11845 / VT8) (Marinobacter aquaeolei).